A 433-amino-acid polypeptide reads, in one-letter code: Homeobox protein Hox-D3 (433 aa).

3 disordered regions span residues 44–198 (STPH…SKRV), 258–280 (GILHSPAGQSPERSPPLGGAAGH), and 401–433 (HHGPCDPHPTYTDLSAHHSSQGRLPEAPKLTHL). Residues 58–74 (SLDSDYPSSACSIQSSA) are compositionally biased toward polar residues. The span at 97-106 (NSQGGGGGNQ) shows a compositional bias: gly residues. Pro residues predominate over residues 116–132 (PPQPPPPPPPTLPPSSP). The span at 146–159 (GGLSASSSSSTISK) shows a compositional bias: low complexity. Residues 161–166 (IFPWMK) carry the Antp-type hexapeptide motif. The segment covering 171 to 183 (NSKQKNSCATSGE) has biased composition (polar residues). The homeobox DNA-binding region spans 195–254 (SKRVRTAYTSAQLVELEKEFHFNRYLCRPRRVEMANLLNLTERQIKIWFQNRRMKYKKDQ).

Belongs to the Antp homeobox family. In terms of tissue distribution, detected in adult kidney, but not in other adult tissues tested.

Its subcellular location is the nucleus. Functionally, sequence-specific transcription factor which is part of a developmental regulatory system that provides cells with specific positional identities on the anterior-posterior axis. In Mus musculus (Mouse), this protein is Homeobox protein Hox-D3 (Hoxd3).